We begin with the raw amino-acid sequence, 213 residues long: 2-dehydro-3-deoxy-phosphogluconate aldolase (213 aa).

The active-site Proton acceptor is the E45. Pyruvate contacts are provided by R49, T73, and K133. The active-site Schiff-base intermediate with substrate is K133.

It belongs to the KHG/KDPG aldolase family. Homotrimer.

Its subcellular location is the cytoplasm. It catalyses the reaction 2-dehydro-3-deoxy-6-phospho-D-gluconate = D-glyceraldehyde 3-phosphate + pyruvate. It functions in the pathway carbohydrate acid metabolism; 2-dehydro-3-deoxy-D-gluconate degradation; D-glyceraldehyde 3-phosphate and pyruvate from 2-dehydro-3-deoxy-D-gluconate: step 2/2. In terms of biological role, involved in the degradation of glucose via the Entner-Doudoroff pathway. Catalyzes the reversible, stereospecific retro-aldol cleavage of 2-keto-3-deoxy-6-phosphogluconate (KDPG) to pyruvate and D-glyceraldehyde-3-phosphate. This chain is 2-dehydro-3-deoxy-phosphogluconate aldolase (eda), found in Dickeya dadantii (strain 3937) (Erwinia chrysanthemi (strain 3937)).